The following is a 354-amino-acid chain: Quinone-reactive Ni/Fe-hydrogenase small chain (354 aa).

Positions 1–36 (MLEEKGIERRDFMKWAGAMTAMLSLPATFTPLTAKA) form a signal peptide, tat-type signal. 8 residues coordinate [4Fe-4S] cluster: Cys-53, Cys-56, Cys-153, Cys-186, His-224, Cys-227, Cys-252, and Cys-258. [3Fe-4S] cluster contacts are provided by Cys-267, Cys-286, and Cys-289.

It belongs to the [NiFe]/[NiFeSe] hydrogenase small subunit family. As to quaternary structure, heterodimer of a large and a small subunit. [4Fe-4S] cluster serves as cofactor. It depends on [3Fe-4S] cluster as a cofactor. In terms of processing, predicted to be exported by the Tat system. The position of the signal peptide cleavage has been experimentally proven.

It is found in the cell membrane. It carries out the reaction H2 + a menaquinone = a menaquinol. The chain is Quinone-reactive Ni/Fe-hydrogenase small chain (hydA) from Wolinella succinogenes (strain ATCC 29543 / DSM 1740 / CCUG 13145 / JCM 31913 / LMG 7466 / NCTC 11488 / FDC 602W) (Vibrio succinogenes).